We begin with the raw amino-acid sequence, 115 residues long: Large ribosomal subunit protein bL19 (115 aa).

Belongs to the bacterial ribosomal protein bL19 family.

This protein is located at the 30S-50S ribosomal subunit interface and may play a role in the structure and function of the aminoacyl-tRNA binding site. In Sodalis glossinidius (strain morsitans), this protein is Large ribosomal subunit protein bL19.